The chain runs to 287 residues: Hydroxysteroid 11-beta-dehydrogenase 1-like protein (287 aa).

Residues 1–22 form the signal peptide; sequence MKLYAKLLLCSICVAFIAVRWS. Residues 40-66, 91-92, and 118-120 each bind NADP(+); these read GAST…TARR, DM, and NHI. Ser169 lines the substrate pocket. Tyr182 functions as the Proton acceptor in the catalytic mechanism. Residues 182-186 and 215-221 contribute to the NADP(+) site; these read YASTK and GLIDTDS.

This sequence belongs to the short-chain dehydrogenases/reductases (SDR) family.

The protein localises to the secreted. The catalysed reaction is cortisone + NADPH + H(+) = cortisol + NADP(+). In terms of biological role, unidirectional NADP(+)-dependent cortisol dehydrogenase (in vitro). In Danio rerio (Zebrafish), this protein is Hydroxysteroid 11-beta-dehydrogenase 1-like protein (hsd11b1l).